Reading from the N-terminus, the 33-residue chain is Protamine-M6/M7 (33 aa).

The interval 1-33 (PRRRRETSRPIRRRRRARRAPIRRRRRVVRRRR) is disordered.

As to expression, testis.

It localises to the nucleus. It is found in the chromosome. In terms of biological role, protamines substitute for histones in the chromatin of sperm during the haploid phase of spermatogenesis. They compact sperm DNA into a highly condensed, stable and inactive complex. The protein is Protamine-M6/M7 of Mugil cephalus (Flathead mullet).